Here is a 151-residue protein sequence, read N- to C-terminus: Transcriptional repressor NrdR (151 aa).

The tract at residues 1–24 is disordered; sequence MRCPKCQHNGTRVLDSRPSDESRS. A zinc finger spans residues 3–34; sequence CPKCQHNGTRVLDSRPSDESRSIKRRRECEKC. Residues 14-24 are compositionally biased toward basic and acidic residues; the sequence is LDSRPSDESRS. Residues 49–139 form the ATP-cone domain; that stretch reads LLIIKKDGMR…VYRQFKDINV (91 aa).

It belongs to the NrdR family. Requires Zn(2+) as cofactor.

In terms of biological role, negatively regulates transcription of bacterial ribonucleotide reductase nrd genes and operons by binding to NrdR-boxes. This chain is Transcriptional repressor NrdR, found in Shouchella clausii (strain KSM-K16) (Alkalihalobacillus clausii).